Here is a 256-residue protein sequence, read N- to C-terminus: Lysine-rich coiled-coil protein 1 (256 aa).

Disordered stretches follow at residues 61 to 83 and 141 to 256; these read QRIP…TEDR and GHST…ILGF. 2 stretches are compositionally biased toward polar residues: residues 64 to 79 and 141 to 153; these read PSGT…SSSQ and GHST…SHRQ. 2 stretches are compositionally biased toward basic and acidic residues: residues 161-188 and 218-227; these read HLEE…DLNK and KNRDVSSKKE. Positions 208–247 form a coiled coil; sequence TEKLKNRKEKKNRDVSSKKEDRKRRKEKKEQGEERTEEEM.

The polypeptide is Lysine-rich coiled-coil protein 1 (Krcc1) (Rattus norvegicus (Rat)).